A 426-amino-acid polypeptide reads, in one-letter code: Tol-Pal system protein TolB (426 aa).

The signal sequence occupies residues 1 to 24 (MKLKSRFTSIIGVITLFFSQTVTA).

It belongs to the TolB family. As to quaternary structure, the Tol-Pal system is composed of five core proteins: the inner membrane proteins TolA, TolQ and TolR, the periplasmic protein TolB and the outer membrane protein Pal. They form a network linking the inner and outer membranes and the peptidoglycan layer.

The protein resides in the periplasm. Its function is as follows. Part of the Tol-Pal system, which plays a role in outer membrane invagination during cell division and is important for maintaining outer membrane integrity. This chain is Tol-Pal system protein TolB, found in Actinobacillus pleuropneumoniae serotype 5b (strain L20).